An 89-amino-acid polypeptide reads, in one-letter code: Small ribosomal subunit protein uS15 (89 aa).

The protein belongs to the universal ribosomal protein uS15 family. In terms of assembly, part of the 30S ribosomal subunit. Forms a bridge to the 50S subunit in the 70S ribosome, contacting the 23S rRNA.

In terms of biological role, one of the primary rRNA binding proteins, it binds directly to 16S rRNA where it helps nucleate assembly of the platform of the 30S subunit by binding and bridging several RNA helices of the 16S rRNA. Forms an intersubunit bridge (bridge B4) with the 23S rRNA of the 50S subunit in the ribosome. The polypeptide is Small ribosomal subunit protein uS15 (Azotobacter vinelandii (strain DJ / ATCC BAA-1303)).